The chain runs to 125 residues: Protein ApaG (125 aa).

The 125-residue stretch at 1–125 (MNDTPRVCVQ…FRLAIATHIH (125 aa)) folds into the ApaG domain.

The chain is Protein ApaG from Erwinia tasmaniensis (strain DSM 17950 / CFBP 7177 / CIP 109463 / NCPPB 4357 / Et1/99).